Here is a 357-residue protein sequence, read N- to C-terminus: Heat-inducible transcription repressor HrcA (357 aa).

This sequence belongs to the HrcA family.

Functionally, negative regulator of class I heat shock genes (grpE-dnaK-dnaJ and groELS operons). Prevents heat-shock induction of these operons. This chain is Heat-inducible transcription repressor HrcA, found in Ureaplasma parvum serovar 3 (strain ATCC 27815 / 27 / NCTC 11736).